The sequence spans 156 residues: Ribosomal RNA large subunit methyltransferase H (156 aa).

S-adenosyl-L-methionine contacts are provided by residues L73, G104, and 123–128 (LSALTL).

The protein belongs to the RNA methyltransferase RlmH family. In terms of assembly, homodimer.

The protein resides in the cytoplasm. It carries out the reaction pseudouridine(1915) in 23S rRNA + S-adenosyl-L-methionine = N(3)-methylpseudouridine(1915) in 23S rRNA + S-adenosyl-L-homocysteine + H(+). In terms of biological role, specifically methylates the pseudouridine at position 1915 (m3Psi1915) in 23S rRNA. The polypeptide is Ribosomal RNA large subunit methyltransferase H (Erwinia tasmaniensis (strain DSM 17950 / CFBP 7177 / CIP 109463 / NCPPB 4357 / Et1/99)).